The following is a 414-amino-acid chain: Glucose-1-phosphate adenylyltransferase (414 aa).

Alpha-D-glucose 1-phosphate-binding positions include Y99, G164, 181-182, and S199; that span reads EK.

The protein belongs to the bacterial/plant glucose-1-phosphate adenylyltransferase family. As to quaternary structure, homotetramer.

It carries out the reaction alpha-D-glucose 1-phosphate + ATP + H(+) = ADP-alpha-D-glucose + diphosphate. The protein operates within glycan biosynthesis; glycogen biosynthesis. Functionally, involved in the biosynthesis of ADP-glucose, a building block required for the elongation reactions to produce glycogen. Catalyzes the reaction between ATP and alpha-D-glucose 1-phosphate (G1P) to produce pyrophosphate and ADP-Glc. This is Glucose-1-phosphate adenylyltransferase from Bifidobacterium longum (strain DJO10A).